A 278-amino-acid polypeptide reads, in one-letter code: RsbT co-antagonist protein RsbRD (278 aa).

Residues 160–271 form the STAS domain; sequence SAPIMPITDG…QSLAKALANK (112 aa). T181 bears the Phosphothreonine mark.

Probably present in the stressosome with RsbRA, RsbRB, RsbRC and RsbS. In terms of processing, phosphorylated by RsbT.

In terms of biological role, one of 4 functionally non-identical RsbR paralogs, it functions in the environmental signaling branch of the general stress response. Negative regulator of sigma-B activity. Non-phosphorylated RsbS binds to RsbT, preventing its association with RsbU. Requires any one of RsbRA, RsbRB, RsbRC or RsbRD to sequester RsbT. When RsbS and the RsbR paralog(s) are phosphorylated, they release RsbT, which can then bind and activate RsbU. In Bacillus subtilis (strain 168), this protein is RsbT co-antagonist protein RsbRD (rsbRD).